A 209-amino-acid polypeptide reads, in one-letter code: Uracil phosphoribosyltransferase (209 aa).

5-phospho-alpha-D-ribose 1-diphosphate is bound by residues R79, R104, and 131-139 (DPMLATGGS). Uracil is bound by residues I194 and 199-201 (GDA). D200 lines the 5-phospho-alpha-D-ribose 1-diphosphate pocket.

It belongs to the UPRTase family. The cofactor is Mg(2+).

It catalyses the reaction UMP + diphosphate = 5-phospho-alpha-D-ribose 1-diphosphate + uracil. Its pathway is pyrimidine metabolism; UMP biosynthesis via salvage pathway; UMP from uracil: step 1/1. Allosterically activated by GTP. Its function is as follows. Catalyzes the conversion of uracil and 5-phospho-alpha-D-ribose 1-diphosphate (PRPP) to UMP and diphosphate. This is Uracil phosphoribosyltransferase from Alkaliphilus oremlandii (strain OhILAs) (Clostridium oremlandii (strain OhILAs)).